Reading from the N-terminus, the 211-residue chain is Probable cytokinin riboside 5'-monophosphate phosphoribohydrolase LOGL3 (211 aa).

Substrate-binding positions include E84, 102 to 103, 119 to 125, and T131; these read RK and GYGTLEE.

Belongs to the LOG family. In terms of tissue distribution, expressed in roots, leaves, stems, tiller buds, shoot apex, immature inflorescences and flowers.

It carries out the reaction N(6)-(dimethylallyl)adenosine 5'-phosphate + H2O = N(6)-dimethylallyladenine + D-ribose 5-phosphate. The catalysed reaction is 9-ribosyl-trans-zeatin 5'-phosphate + H2O = trans-zeatin + D-ribose 5-phosphate. Its function is as follows. Cytokinin-activating enzyme working in the direct activation pathway. Phosphoribohydrolase that converts inactive cytokinin nucleotides to the biologically active free-base forms. This chain is Probable cytokinin riboside 5'-monophosphate phosphoribohydrolase LOGL3 (LOGL3), found in Oryza sativa subsp. japonica (Rice).